Reading from the N-terminus, the 463-residue chain is Ribulose bisphosphate carboxylase (463 aa).

A substrate-binding site is contributed by asparagine 116. Lysine 171 (proton acceptor) is an active-site residue. Position 173 (lysine 173) interacts with substrate. Mg(2+) is bound by residues lysine 196, aspartate 198, and glutamate 199. At lysine 196 the chain carries N6-carboxylysine. Histidine 294 (proton acceptor) is an active-site residue. The substrate site is built by arginine 295, histidine 328, and serine 375.

This sequence belongs to the RuBisCO large chain family. Type II subfamily. In terms of assembly, homodimer. Requires Mg(2+) as cofactor.

The enzyme catalyses 2 (2R)-3-phosphoglycerate + 2 H(+) = D-ribulose 1,5-bisphosphate + CO2 + H2O. The catalysed reaction is D-ribulose 1,5-bisphosphate + O2 = 2-phosphoglycolate + (2R)-3-phosphoglycerate + 2 H(+). Its function is as follows. RuBisCO catalyzes two reactions: the carboxylation of D-ribulose 1,5-bisphosphate, the primary event in carbon dioxide fixation, as well as the oxidative fragmentation of the pentose substrate. Both reactions occur simultaneously and in competition at the same active site. This is Ribulose bisphosphate carboxylase from Hydrogenovibrio marinus.